A 689-amino-acid polypeptide reads, in one-letter code: Elongation factor G (689 aa).

One can recognise a tr-type G domain in the interval 8-282; it reads ERTRNIGIMA…GVVAYMPSPL (275 aa). Residues 17–24, 81–85, and 135–138 contribute to the GTP site; these read AHIDAGKT, DTPGH, and NKMD.

Belongs to the TRAFAC class translation factor GTPase superfamily. Classic translation factor GTPase family. EF-G/EF-2 subfamily.

It is found in the cytoplasm. In terms of biological role, catalyzes the GTP-dependent ribosomal translocation step during translation elongation. During this step, the ribosome changes from the pre-translocational (PRE) to the post-translocational (POST) state as the newly formed A-site-bound peptidyl-tRNA and P-site-bound deacylated tRNA move to the P and E sites, respectively. Catalyzes the coordinated movement of the two tRNA molecules, the mRNA and conformational changes in the ribosome. This is Elongation factor G from Alkaliphilus metalliredigens (strain QYMF).